Consider the following 43-residue polypeptide: Mu-conotoxin-like CalTx 12.2.1E (43 aa).

A propeptide is located at residue Arg1. 4 cysteine pairs are disulfide-bonded: Cys4-Cys16, Cys11-Cys24, Cys18-Cys29, and Cys23-Cys35. A 6'-bromotryptophan modification is found at Trp31. At Pro36 the chain carries 4-hydroxyproline. Trp40 is subject to 6'-bromotryptophan.

In terms of tissue distribution, expressed by the venom duct.

Its subcellular location is the secreted. Functionally, mu-conotoxins block voltage-gated sodium channels. This toxin reversibly blocks voltage-gated sodium channel in cephalopods, with no alteration in the voltage dependence of sodium conductance or on the kinetics of inactivation. The protein is Mu-conotoxin-like CalTx 12.2.1E of Californiconus californicus (California cone).